The primary structure comprises 364 residues: Phospho-N-acetylmuramoyl-pentapeptide-transferase (364 aa).

10 consecutive transmembrane segments (helical) span residues 18–38 (SLLILLILLLGLLCLGFAQIL), 48–68 (LFPLAVSAICSAILGYVVVPV), 91–111 (GTPTMGGIFFVPVAVIIALIW), 114–134 (LDPAVLAVSIVTLAYMGIGWI), 154–174 (LILQIAIAVGFCIWTFLTQSA), 183–203 (GQIILPLGLFFWIIAGFVLVA), 214–234 (VDGLAGGTGSLAFLGLAALMA), 237–257 (NPGLMIFCACMSGGCLGFIVH), 280–300 (AIGILSGHVWGLFLVSGIFFV), and 343–363 (TQIVGLFYLINAGLAVLAVIS).

It belongs to the glycosyltransferase 4 family. MraY subfamily. The cofactor is Mg(2+).

The protein localises to the cell inner membrane. It carries out the reaction UDP-N-acetyl-alpha-D-muramoyl-L-alanyl-gamma-D-glutamyl-meso-2,6-diaminopimeloyl-D-alanyl-D-alanine + di-trans,octa-cis-undecaprenyl phosphate = di-trans,octa-cis-undecaprenyl diphospho-N-acetyl-alpha-D-muramoyl-L-alanyl-D-glutamyl-meso-2,6-diaminopimeloyl-D-alanyl-D-alanine + UMP. Its pathway is cell wall biogenesis; peptidoglycan biosynthesis. Catalyzes the initial step of the lipid cycle reactions in the biosynthesis of the cell wall peptidoglycan: transfers peptidoglycan precursor phospho-MurNAc-pentapeptide from UDP-MurNAc-pentapeptide onto the lipid carrier undecaprenyl phosphate, yielding undecaprenyl-pyrophosphoryl-MurNAc-pentapeptide, known as lipid I. This is Phospho-N-acetylmuramoyl-pentapeptide-transferase from Rippkaea orientalis (strain PCC 8801 / RF-1) (Cyanothece sp. (strain PCC 8801)).